Here is a 509-residue protein sequence, read N- to C-terminus: GMP synthase [glutamine-hydrolyzing] (509 aa).

Positions 4-194 (LVLVVDFGGQ…LYNICGLENS (191 aa)) constitute a Glutamine amidotransferase type-1 domain. Cys-81 functions as the Nucleophile in the catalytic mechanism. Residues His-168 and Glu-170 contribute to the active site. A GMPS ATP-PPase domain is found at 195–384 (WSMASFAEEK…LGIPHHLVWR (190 aa)). 222–228 (SGGVDSS) provides a ligand contact to ATP.

Homodimer.

It catalyses the reaction XMP + L-glutamine + ATP + H2O = GMP + L-glutamate + AMP + diphosphate + 2 H(+). It functions in the pathway purine metabolism; GMP biosynthesis; GMP from XMP (L-Gln route): step 1/1. Functionally, catalyzes the synthesis of GMP from XMP. The polypeptide is GMP synthase [glutamine-hydrolyzing] (Clostridium perfringens (strain 13 / Type A)).